Reading from the N-terminus, the 447-residue chain is Na(+)-translocating NADH-quinone reductase subunit A (447 aa).

This sequence belongs to the NqrA family. Composed of six subunits; NqrA, NqrB, NqrC, NqrD, NqrE and NqrF.

It carries out the reaction a ubiquinone + n Na(+)(in) + NADH + H(+) = a ubiquinol + n Na(+)(out) + NAD(+). Functionally, NQR complex catalyzes the reduction of ubiquinone-1 to ubiquinol by two successive reactions, coupled with the transport of Na(+) ions from the cytoplasm to the periplasm. NqrA to NqrE are probably involved in the second step, the conversion of ubisemiquinone to ubiquinol. This Klebsiella pneumoniae subsp. pneumoniae (strain ATCC 700721 / MGH 78578) protein is Na(+)-translocating NADH-quinone reductase subunit A.